Reading from the N-terminus, the 554-residue chain is Phenylalanine--tRNA ligase beta subunit (554 aa).

The B5 domain maps to 274–351 (LTPDSAEITI…INYGYENFNG (78 aa)). Asp329, Asp335, and Asp339 together coordinate Mg(2+).

This sequence belongs to the phenylalanyl-tRNA synthetase beta subunit family. Type 2 subfamily. In terms of assembly, tetramer of two alpha and two beta subunits. Requires Mg(2+) as cofactor.

Its subcellular location is the cytoplasm. The catalysed reaction is tRNA(Phe) + L-phenylalanine + ATP = L-phenylalanyl-tRNA(Phe) + AMP + diphosphate + H(+). The protein is Phenylalanine--tRNA ligase beta subunit of Methanococcus aeolicus (strain ATCC BAA-1280 / DSM 17508 / OCM 812 / Nankai-3).